A 120-amino-acid chain; its full sequence is LOB domain-containing protein 8 (120 aa).

An LOB domain is found at Arg-8 to Ile-109.

It belongs to the LOB domain-containing protein family.

The polypeptide is LOB domain-containing protein 8 (LBD8) (Arabidopsis thaliana (Mouse-ear cress)).